The chain runs to 173 residues: Large ribosomal subunit protein uL10 (173 aa).

The protein belongs to the universal ribosomal protein uL10 family. In terms of assembly, part of the ribosomal stalk of the 50S ribosomal subunit. The N-terminus interacts with L11 and the large rRNA to form the base of the stalk. The C-terminus forms an elongated spine to which L12 dimers bind in a sequential fashion forming a multimeric L10(L12)X complex.

Functionally, forms part of the ribosomal stalk, playing a central role in the interaction of the ribosome with GTP-bound translation factors. In Cupriavidus necator (strain ATCC 17699 / DSM 428 / KCTC 22496 / NCIMB 10442 / H16 / Stanier 337) (Ralstonia eutropha), this protein is Large ribosomal subunit protein uL10.